Here is a 75-residue protein sequence, read N- to C-terminus: Salivary glue protein Sgs-8 (75 aa).

A signal peptide spans 1–24 (MKLLVVAVIACIMLIGFADPASGC).

This is Salivary glue protein Sgs-8 (Sgs8) from Drosophila melanogaster (Fruit fly).